Here is a 512-residue protein sequence, read N- to C-terminus: 2,3-bisphosphoglycerate-independent phosphoglycerate mutase (512 aa).

Positions 11 and 61 each coordinate Mn(2+). Ser-61 (phosphoserine intermediate) is an active-site residue. Substrate contacts are provided by residues His-122, Arg-152–Asp-153, Arg-184, Arg-190, Arg-259–Arg-262, and Lys-332. Positions 399, 403, 440, 441, and 459 each coordinate Mn(2+).

Belongs to the BPG-independent phosphoglycerate mutase family. Monomer. The cofactor is Mn(2+).

The enzyme catalyses (2R)-2-phosphoglycerate = (2R)-3-phosphoglycerate. It functions in the pathway carbohydrate degradation; glycolysis; pyruvate from D-glyceraldehyde 3-phosphate: step 3/5. Functionally, catalyzes the interconversion of 2-phosphoglycerate and 3-phosphoglycerate. This is 2,3-bisphosphoglycerate-independent phosphoglycerate mutase from Francisella tularensis subsp. tularensis (strain WY96-3418).